A 658-amino-acid polypeptide reads, in one-letter code: Threonine--tRNA ligase (658 aa).

The TGS domain occupies 1–61 (MSDVRVIIQR…KDGETVEAVE (61 aa)). The interval 259 to 554 (DHRKLGSELD…LLEHYAGAMP (296 aa)) is catalytic. Zn(2+) contacts are provided by Cys-353, His-404, and His-531.

The protein belongs to the class-II aminoacyl-tRNA synthetase family. As to quaternary structure, homodimer. It depends on Zn(2+) as a cofactor.

It localises to the cytoplasm. The catalysed reaction is tRNA(Thr) + L-threonine + ATP = L-threonyl-tRNA(Thr) + AMP + diphosphate + H(+). Functionally, catalyzes the attachment of threonine to tRNA(Thr) in a two-step reaction: L-threonine is first activated by ATP to form Thr-AMP and then transferred to the acceptor end of tRNA(Thr). Also edits incorrectly charged L-seryl-tRNA(Thr). In Streptomyces coelicolor (strain ATCC BAA-471 / A3(2) / M145), this protein is Threonine--tRNA ligase.